The following is a 628-amino-acid chain: Putative serine esterase Mb1866c (628 aa).

The active-site Acyl-ester intermediate is S156. Residues D322 and H350 each act as charge relay system in the active site.

This sequence belongs to the CocE/NonD hydrolase family.

The chain is Putative serine esterase Mb1866c from Mycobacterium bovis (strain ATCC BAA-935 / AF2122/97).